A 273-amino-acid polypeptide reads, in one-letter code: 4-hydroxy-3-methylbut-2-enyl diphosphate reductase (273 aa).

A [4Fe-4S] cluster-binding site is contributed by Cys-12. (2E)-4-hydroxy-3-methylbut-2-enyl diphosphate-binding residues include His-36 and His-70. His-36 and His-70 together coordinate dimethylallyl diphosphate. Residues His-36 and His-70 each coordinate isopentenyl diphosphate. Position 92 (Cys-92) interacts with [4Fe-4S] cluster. Position 120 (His-120) interacts with (2E)-4-hydroxy-3-methylbut-2-enyl diphosphate. A dimethylallyl diphosphate-binding site is contributed by His-120. His-120 is an isopentenyl diphosphate binding site. Glu-122 (proton donor) is an active-site residue. Thr-157 is a (2E)-4-hydroxy-3-methylbut-2-enyl diphosphate binding site. [4Fe-4S] cluster is bound at residue Cys-185. (2E)-4-hydroxy-3-methylbut-2-enyl diphosphate-binding residues include Ser-213, Ser-214, Asn-215, and Ser-257. Residues Ser-213, Ser-214, Asn-215, and Ser-257 each contribute to the dimethylallyl diphosphate site. Isopentenyl diphosphate contacts are provided by Ser-213, Ser-214, Asn-215, and Ser-257.

This sequence belongs to the IspH family. It depends on [4Fe-4S] cluster as a cofactor.

The catalysed reaction is isopentenyl diphosphate + 2 oxidized [2Fe-2S]-[ferredoxin] + H2O = (2E)-4-hydroxy-3-methylbut-2-enyl diphosphate + 2 reduced [2Fe-2S]-[ferredoxin] + 2 H(+). It catalyses the reaction dimethylallyl diphosphate + 2 oxidized [2Fe-2S]-[ferredoxin] + H2O = (2E)-4-hydroxy-3-methylbut-2-enyl diphosphate + 2 reduced [2Fe-2S]-[ferredoxin] + 2 H(+). It functions in the pathway isoprenoid biosynthesis; dimethylallyl diphosphate biosynthesis; dimethylallyl diphosphate from (2E)-4-hydroxy-3-methylbutenyl diphosphate: step 1/1. Its pathway is isoprenoid biosynthesis; isopentenyl diphosphate biosynthesis via DXP pathway; isopentenyl diphosphate from 1-deoxy-D-xylulose 5-phosphate: step 6/6. Its function is as follows. Catalyzes the conversion of 1-hydroxy-2-methyl-2-(E)-butenyl 4-diphosphate (HMBPP) into a mixture of isopentenyl diphosphate (IPP) and dimethylallyl diphosphate (DMAPP). Acts in the terminal step of the DOXP/MEP pathway for isoprenoid precursor biosynthesis. The protein is 4-hydroxy-3-methylbut-2-enyl diphosphate reductase of Helicobacter hepaticus (strain ATCC 51449 / 3B1).